Consider the following 478-residue polypeptide: Protein WVD2-like 7 (478 aa).

2 disordered regions span residues 201-326 (DSAL…TGST) and 385-420 (PMPS…SASI). Basic and acidic residues predominate over residues 208–217 (AGSKLDEHAS). Composition is skewed to polar residues over residues 219–232 (KPSN…SSVN) and 264–277 (GSSL…NVDA). The segment covering 278 to 289 (KSQKELRPKKTI) has biased composition (basic and acidic residues). Composition is skewed to polar residues over residues 309–326 (RCKT…TGST) and 407–420 (VAQS…SASI).

The protein belongs to the TPX2 family. As to expression, expressed in seedlings.

It is found in the cytoplasm. The protein localises to the cytoskeleton. Its function is as follows. Microtubule-associated protein (MAP) that regulates the orientation of interphase cortical microtubules. This chain is Protein WVD2-like 7, found in Arabidopsis thaliana (Mouse-ear cress).